We begin with the raw amino-acid sequence, 412 residues long: 4-hydroxy-3-methylbut-2-en-1-yl diphosphate synthase (ferredoxin) (412 aa).

Positions 1-12 (MQTLDRPNAPSQ) are enriched in polar residues. The tract at residues 1–22 (MQTLDRPNAPSQQPYPEPVYPR) is disordered. [4Fe-4S] cluster-binding residues include Cys-314, Cys-317, Cys-348, and Glu-355.

This sequence belongs to the IspG family. The cofactor is [4Fe-4S] cluster.

It carries out the reaction (2E)-4-hydroxy-3-methylbut-2-enyl diphosphate + 2 oxidized [2Fe-2S]-[ferredoxin] + H2O = 2-C-methyl-D-erythritol 2,4-cyclic diphosphate + 2 reduced [2Fe-2S]-[ferredoxin] + H(+). It participates in isoprenoid biosynthesis; isopentenyl diphosphate biosynthesis via DXP pathway; isopentenyl diphosphate from 1-deoxy-D-xylulose 5-phosphate: step 5/6. Converts 2C-methyl-D-erythritol 2,4-cyclodiphosphate (ME-2,4cPP) into 1-hydroxy-2-methyl-2-(E)-butenyl 4-diphosphate. The sequence is that of 4-hydroxy-3-methylbut-2-en-1-yl diphosphate synthase (ferredoxin) from Synechococcus sp. (strain JA-3-3Ab) (Cyanobacteria bacterium Yellowstone A-Prime).